Reading from the N-terminus, the 49-residue chain is Large ribosomal subunit protein bL33A (49 aa).

The protein belongs to the bacterial ribosomal protein bL33 family.

The chain is Large ribosomal subunit protein bL33A from Bacillus licheniformis (strain ATCC 14580 / DSM 13 / JCM 2505 / CCUG 7422 / NBRC 12200 / NCIMB 9375 / NCTC 10341 / NRRL NRS-1264 / Gibson 46).